The sequence spans 559 residues: NAD-dependent malic enzyme 2 (559 aa).

Tyrosine 98 functions as the Proton donor in the catalytic mechanism. An NAD(+)-binding site is contributed by arginine 151. Lysine 169 functions as the Proton acceptor in the catalytic mechanism. Residues glutamate 240, aspartate 241, and aspartate 264 each contribute to the a divalent metal cation site. NAD(+) contacts are provided by aspartate 264 and asparagine 413.

It belongs to the malic enzymes family. Homotetramer. Mg(2+) serves as cofactor. Mn(2+) is required as a cofactor.

It carries out the reaction (S)-malate + NAD(+) = pyruvate + CO2 + NADH. The catalysed reaction is oxaloacetate + H(+) = pyruvate + CO2. In Vibrio vulnificus (strain YJ016), this protein is NAD-dependent malic enzyme 2.